The sequence spans 952 residues: G patch domain-containing protein 1 homolog (952 aa).

Disordered regions lie at residues 104–127 (QGIR…QRRR), 165–233 (GWKP…DDYE), 320–345 (DKKP…EDNS), 370–432 (RSRF…KDHS), 660–711 (PEKV…RNKP), and 822–952 (VAPE…KSKH). Residues 107–123 (RTRDEFANEDEQKQRSD) show a composition bias toward basic and acidic residues. One can recognise a G-patch domain in the interval 153 to 199 (RDKVAVRILKSMGWKPGQGVGPRQTRKEKRQATARNSKEQYLMEHYG). Residues 214–233 (DSNNEDEDDEDITFAPDDYE) show a composition bias toward acidic residues. Over residues 323-333 (PKQKKQQHVQQ) the composition is skewed to basic residues. Composition is skewed to basic and acidic residues over residues 375–402 (PMDK…DLNP), 414–432 (QEEK…KDHS), and 679–691 (IQDK…EPSK). A compositionally biased stretch (low complexity) spans 886-896 (ASSSNESSSSD). Basic residues-rich tracts occupy residues 906–934 (KLSK…KKSK) and 941–952 (HKAKKKKKKSKH).

This sequence belongs to the GPATCH1 family.

The sequence is that of G patch domain-containing protein 1 homolog from Drosophila melanogaster (Fruit fly).